Consider the following 374-residue polypeptide: Anhydro-N-acetylmuramic acid kinase (374 aa).

Position 9–16 (9–16 (GTSLDGID)) interacts with ATP.

It belongs to the anhydro-N-acetylmuramic acid kinase family.

It carries out the reaction 1,6-anhydro-N-acetyl-beta-muramate + ATP + H2O = N-acetyl-D-muramate 6-phosphate + ADP + H(+). The protein operates within amino-sugar metabolism; 1,6-anhydro-N-acetylmuramate degradation. It participates in cell wall biogenesis; peptidoglycan recycling. In terms of biological role, catalyzes the specific phosphorylation of 1,6-anhydro-N-acetylmuramic acid (anhMurNAc) with the simultaneous cleavage of the 1,6-anhydro ring, generating MurNAc-6-P. Is required for the utilization of anhMurNAc either imported from the medium or derived from its own cell wall murein, and thus plays a role in cell wall recycling. The protein is Anhydro-N-acetylmuramic acid kinase of Methylobacterium nodulans (strain LMG 21967 / CNCM I-2342 / ORS 2060).